The chain runs to 517 residues: DNA primase DnaG (517 aa).

In terms of domain architecture, Toprim spans 171–257 (DAIIILEGRA…CVEDLVQKEV (87 aa)). Residues glutamate 177, aspartate 219, and aspartate 221 each coordinate Mg(2+).

This sequence belongs to the archaeal DnaG primase family. As to quaternary structure, forms a ternary complex with MCM helicase and DNA. Component of the archaeal exosome complex. It depends on Mg(2+) as a cofactor.

It catalyses the reaction ssDNA + n NTP = ssDNA/pppN(pN)n-1 hybrid + (n-1) diphosphate.. Its function is as follows. RNA polymerase that catalyzes the synthesis of short RNA molecules used as primers for DNA polymerase during DNA replication. Also part of the exosome, which is a complex involved in RNA degradation. Acts as a poly(A)-binding protein that enhances the interaction between heteromeric, adenine-rich transcripts and the exosome. In Methanosarcina barkeri (strain Fusaro / DSM 804), this protein is DNA primase DnaG.